We begin with the raw amino-acid sequence, 304 residues long: Dihydroorotate dehydrogenase B (NAD(+)), catalytic subunit (304 aa).

Residues serine 21 and 45 to 46 contribute to the FMN site; that span reads KA. Residues lysine 45 and 69 to 73 contribute to the substrate site; that span reads NAIGL. FMN contacts are provided by asparagine 99 and asparagine 127. Asparagine 127 contacts substrate. Cysteine 130 serves as the catalytic Nucleophile. Lysine 165 and isoleucine 191 together coordinate FMN. 192–193 is a substrate binding site; that stretch reads NT. FMN contacts are provided by residues glycine 217, 243–244, and 265–266; these read GG and GT.

The protein belongs to the dihydroorotate dehydrogenase family. Type 1 subfamily. Heterotetramer of 2 PyrK and 2 PyrD type B subunits. FMN serves as cofactor.

It localises to the cytoplasm. The enzyme catalyses (S)-dihydroorotate + NAD(+) = orotate + NADH + H(+). The protein operates within pyrimidine metabolism; UMP biosynthesis via de novo pathway; orotate from (S)-dihydroorotate (NAD(+) route): step 1/1. Functionally, catalyzes the conversion of dihydroorotate to orotate with NAD(+) as electron acceptor. The sequence is that of Dihydroorotate dehydrogenase B (NAD(+)), catalytic subunit (pyrD) from Listeria monocytogenes serovar 1/2a (strain ATCC BAA-679 / EGD-e).